The sequence spans 224 residues: UPF0758 protein BLi02933/BL00636 (224 aa).

The 123-residue stretch at Val102 to Leu224 folds into the MPN domain. 3 residues coordinate Zn(2+): His173, His175, and Asp186. Positions His173 to Asp186 match the JAMM motif motif.

This sequence belongs to the UPF0758 family.

This chain is UPF0758 protein BLi02933/BL00636, found in Bacillus licheniformis (strain ATCC 14580 / DSM 13 / JCM 2505 / CCUG 7422 / NBRC 12200 / NCIMB 9375 / NCTC 10341 / NRRL NRS-1264 / Gibson 46).